The chain runs to 2568 residues: Highly reducing polyketide synthase resH (2568 aa).

Residues 9 to 437 (PEPIAIVGMA…GANAHAILDA (429 aa)) form the Ketosynthase family 3 (KS3) domain. Residues cysteine 184, histidine 319, and histidine 359 each act as for beta-ketoacyl synthase activity in the active site. Residues 549 to 877 (FIFTGQGAQW…KLAGSLFLSG (329 aa)) enclose the Malonyl-CoA:ACP transacylase (MAT) domain. The segment at 942 to 1081 (HDLLGSRLPG…TNDQLLWPDD (140 aa)) is N-terminal hotdog fold. A PKS/mFAS DH domain is found at 942 to 1244 (HDLLGSRLPG…FSSLETASSD (303 aa)). Histidine 974 functions as the Proton acceptor; for dehydratase activity in the catalytic mechanism. The segment at 1091-1244 (NKDSYDRRWY…FSSLETASSD (154 aa)) is C-terminal hotdog fold. Aspartate 1156 acts as the Proton donor; for dehydratase activity in catalysis. The methyltransferase (CMet) domain stretch occupies residues 1295-1595 (VTRLAIRSSA…SGADVVLDDY (301 aa)). The region spanning 1853 to 2154 (GRLDSFYFKE…QEDSVGLAVL (302 aa)) is the Enoyl reductase (ER) domain. Positions 2177–2357 (ASYLLIGCLG…QATSIALGMI (181 aa)) constitute a Ketoreductase (KR) domain. The Carrier domain occupies 2485-2563 (AVKSAILGLI…GLADQVVSLA (79 aa)). Serine 2522 carries the post-translational modification O-(pantetheine 4'-phosphoryl)serine.

Requires pantetheine 4'-phosphate as cofactor.

It functions in the pathway antifungal biosynthesis. Functionally, highly reducing polyketide synthase; part of the gene cluster that mediates the biosynthesis of the tetrahydropyranyl antifungal agent restricticin that acts as an inhibitor of CYP51 and blocks the ergosterol biosynthesis. The highly reducing polyketide synthase resH, the short chain dehydrogenase resG, the cyclase resF, the FAD-dependent monooxygenase resA and the enoylreductase resD are required to generate the first stable intermediate desmethylrestrictinol. ResH with resD biosynthesize the first polyketide chain intermediate that is reduced by resG, followed by epoxidation by resA before 6-endo cyclization via epoxide opening by resF leads to desmethylrestrictinol. The methyltransferase resE then catalyzes the C4 O-methylation of desmethylrestrictinol to produce restrictinol, and the nonribosomal peptide synthetase resC catalyzes the C3 esterification of restrictinol with glycine that leads to restricticin. This is Highly reducing polyketide synthase resH from Aspergillus sclerotiorum.